The primary structure comprises 59 residues: Ribosome biogenesis protein Nop10 (59 aa).

This sequence belongs to the NOP10 family.

In terms of biological role, involved in ribosome biogenesis; more specifically in 18S rRNA pseudouridylation and in cleavage of pre-rRNA. The polypeptide is Ribosome biogenesis protein Nop10 (Thermococcus kodakarensis (strain ATCC BAA-918 / JCM 12380 / KOD1) (Pyrococcus kodakaraensis (strain KOD1))).